A 102-amino-acid polypeptide reads, in one-letter code: NADH-quinone oxidoreductase subunit K (102 aa).

The next 3 helical transmembrane spans lie at 5–25, 31–51, and 62–82; these read LGHYLSLGAMLFALSVIGIFL, IVLLMAIELMLLAVNLNFVAF, and VFVFFILTVAAAESAIGLAIL.

It belongs to the complex I subunit 4L family. NDH-1 is composed of 14 different subunits. Subunits NuoA, H, J, K, L, M, N constitute the membrane sector of the complex.

It localises to the cell inner membrane. The enzyme catalyses a quinone + NADH + 5 H(+)(in) = a quinol + NAD(+) + 4 H(+)(out). In terms of biological role, NDH-1 shuttles electrons from NADH, via FMN and iron-sulfur (Fe-S) centers, to quinones in the respiratory chain. The immediate electron acceptor for the enzyme in this species is believed to be ubiquinone. Couples the redox reaction to proton translocation (for every two electrons transferred, four hydrogen ions are translocated across the cytoplasmic membrane), and thus conserves the redox energy in a proton gradient. In Methylibium petroleiphilum (strain ATCC BAA-1232 / LMG 22953 / PM1), this protein is NADH-quinone oxidoreductase subunit K.